The following is a 140-amino-acid chain: ATP synthase epsilon chain (140 aa).

It belongs to the ATPase epsilon chain family. In terms of assembly, F-type ATPases have 2 components, CF(1) - the catalytic core - and CF(0) - the membrane proton channel. CF(1) has five subunits: alpha(3), beta(3), gamma(1), delta(1), epsilon(1). CF(0) has three main subunits: a, b and c.

It is found in the cell inner membrane. Its function is as follows. Produces ATP from ADP in the presence of a proton gradient across the membrane. This Xanthomonas campestris pv. campestris (strain 8004) protein is ATP synthase epsilon chain.